An 828-amino-acid chain; its full sequence is Leucine--tRNA ligase (828 aa).

The 'HIGH' region signature appears at 36–46 (PYPSGKIHIGH). A 'KMSKS' region motif is present at residues 595 to 599 (KMSKS). Lys-598 contacts ATP.

The protein belongs to the class-I aminoacyl-tRNA synthetase family.

The protein resides in the cytoplasm. It catalyses the reaction tRNA(Leu) + L-leucine + ATP = L-leucyl-tRNA(Leu) + AMP + diphosphate. The chain is Leucine--tRNA ligase from Rickettsia prowazekii (strain Madrid E).